The following is a 231-amino-acid chain: Putative N-acetylmannosamine-6-phosphate 2-epimerase (231 aa).

This sequence belongs to the NanE family.

It carries out the reaction an N-acyl-D-glucosamine 6-phosphate = an N-acyl-D-mannosamine 6-phosphate. It participates in amino-sugar metabolism; N-acetylneuraminate degradation; D-fructose 6-phosphate from N-acetylneuraminate: step 3/5. In terms of biological role, converts N-acetylmannosamine-6-phosphate (ManNAc-6-P) to N-acetylglucosamine-6-phosphate (GlcNAc-6-P). The sequence is that of Putative N-acetylmannosamine-6-phosphate 2-epimerase from Listeria innocua serovar 6a (strain ATCC BAA-680 / CLIP 11262).